We begin with the raw amino-acid sequence, 274 residues long: Large ribosomal subunit protein uL2cz/uL2cy (274 aa).

2 disordered regions span residues 1–22 (MAIH…DSQV) and 225–252 (PVDH…GYPA).

The protein belongs to the universal ribosomal protein uL2 family. Part of the 50S ribosomal subunit.

The protein localises to the plastid. It is found in the chloroplast. The chain is Large ribosomal subunit protein uL2cz/uL2cy (rpl2-A) from Barbarea verna (Land cress).